A 427-amino-acid polypeptide reads, in one-letter code: Acyl-lipid 8-desaturase (427 aa).

The segment at 1–24 (MGRGGDSSGQAHPAAELAVPSDRA) is disordered. Positions 36–84 (IVLYGKRVDVTKFQRTHPGGSKVFRIFQDRDATEQFESYHSKRAIKMME) constitute a Cytochrome b5 heme-binding domain. Histidine 52 and histidine 75 together coordinate heme. The Histidine box-1 signature appears at 178 to 182 (HSVFK). Residues 189–209 (VGWNNAAGYFLGFVQGYAVEW) traverse the membrane as a helical segment. Residues 213 to 218 (RHNTHH) carry the Histidine box-2 motif. 2 helical membrane passes run 261–281 (VPVM…YVAM) and 286–306 (MLPQ…VFAG). Residues 373–377 (QTEHH) carry the Histidine box-3 motif.

The protein belongs to the fatty acid desaturase type 1 family. The cofactor is Fe(2+).

It localises to the membrane. In terms of biological role, fatty acid desaturase that introduces a cis double bond at the 8-position in 20-carbon polyunsaturated fatty acids incorporated in a glycerolipid that contain a Delta(8) double bond to yield (20:4(8,11,14,17)). This chain is Acyl-lipid 8-desaturase, found in Rebecca salina (Marine microalga).